Reading from the N-terminus, the 187-residue chain is MASTADIKNGVVLNMDGQLWTVIEFQHVKPGKGGAFVRTKVKNVMSGKVVDRTFNAGAKIETETVDRRDFQYLYADGENFVFMDTSDYDQITLSAAQVGDAKNFMLENQDVTVALHNGEGLYVELPASVVLTITYTEPGLQGDRSTGGTKPATVETGHQIQVPLFLEQGTRVKVDTRTGDYLGRVTD.

Belongs to the elongation factor P family.

Its subcellular location is the cytoplasm. It participates in protein biosynthesis; polypeptide chain elongation. Involved in peptide bond synthesis. Stimulates efficient translation and peptide-bond synthesis on native or reconstituted 70S ribosomes in vitro. Probably functions indirectly by altering the affinity of the ribosome for aminoacyl-tRNA, thus increasing their reactivity as acceptors for peptidyl transferase. This is Elongation factor P from Clavibacter michiganensis subsp. michiganensis (strain NCPPB 382).